Reading from the N-terminus, the 163-residue chain is Phosphopantetheine adenylyltransferase (163 aa).

Threonine 9 serves as a coordination point for substrate. ATP contacts are provided by residues 9–10 and histidine 17; that span reads TF. Substrate-binding residues include lysine 41, leucine 76, and arginine 90. Residues 91–93, glutamate 101, and 126–132 each bind ATP; these read GLR and HQAIASR.

It belongs to the bacterial CoaD family. In terms of assembly, homohexamer. Mg(2+) is required as a cofactor.

Its subcellular location is the cytoplasm. The catalysed reaction is (R)-4'-phosphopantetheine + ATP + H(+) = 3'-dephospho-CoA + diphosphate. It functions in the pathway cofactor biosynthesis; coenzyme A biosynthesis; CoA from (R)-pantothenate: step 4/5. Its function is as follows. Reversibly transfers an adenylyl group from ATP to 4'-phosphopantetheine, yielding dephospho-CoA (dPCoA) and pyrophosphate. The protein is Phosphopantetheine adenylyltransferase of Caulobacter vibrioides (strain ATCC 19089 / CIP 103742 / CB 15) (Caulobacter crescentus).